Reading from the N-terminus, the 682-residue chain is Potassium-transporting ATPase ATP-binding subunit (682 aa).

4 helical membrane-spanning segments follow: residues 34–54, 58–78, 219–239, and 254–274; these read PVMF…LAMV, IAGS…TVLF, IALT…TATL, and VLVA…LSAI. Aspartate 307 functions as the 4-aspartylphosphate intermediate in the catalytic mechanism. ATP is bound by residues aspartate 344, glutamate 348, 377 to 384, and lysine 395; that span reads FTAQSRMS. Residues aspartate 518 and aspartate 522 each contribute to the Mg(2+) site. 3 helical membrane passes run 588 to 608, 616 to 636, and 662 to 682; these read FAII…LNVM, AILS…PLAL, and LVVP…LGLA.

This sequence belongs to the cation transport ATPase (P-type) (TC 3.A.3) family. Type IA subfamily. In terms of assembly, the system is composed of three essential subunits: KdpA, KdpB and KdpC.

Its subcellular location is the cell inner membrane. The enzyme catalyses K(+)(out) + ATP + H2O = K(+)(in) + ADP + phosphate + H(+). Functionally, part of the high-affinity ATP-driven potassium transport (or Kdp) system, which catalyzes the hydrolysis of ATP coupled with the electrogenic transport of potassium into the cytoplasm. This subunit is responsible for energy coupling to the transport system and for the release of the potassium ions to the cytoplasm. This chain is Potassium-transporting ATPase ATP-binding subunit, found in Salmonella agona (strain SL483).